The following is a 767-amino-acid chain: DNA topoisomerase 1 (767 aa).

Over residues 1 to 23 (MSGDHLHNDSQIEADFRLNDSHK) the composition is skewed to basic and acidic residues. Positions 1 to 201 (MSGDHLHNDS…NKKKKPKKEE (201 aa)) are disordered. Residue S2 is modified to N-acetylserine. Phosphoserine is present on residues S2 and S10. The span at 24–39 (HKDKHKDREHRHKEHK) shows a compositional bias: basic residues. The segment covering 40-110 (KDKEKDREKS…DAKIKKEKEN (71 aa)) has biased composition (basic and acidic residues). Position 59 is a phosphoserine (S59). A Glycyl lysine isopeptide (Lys-Gly) (interchain with G-Cter in SUMO2) cross-link involves residue K103. K105 participates in a covalent cross-link: Glycyl lysine isopeptide (Lys-Gly) (interchain with G-Cter in SUMO); alternate. Residue K105 forms a Glycyl lysine isopeptide (Lys-Gly) (interchain with G-Cter in SUMO2); alternate linkage. Residue S114 is modified to Phosphoserine. A Glycyl lysine isopeptide (Lys-Gly) (interchain with G-Cter in SUMO); alternate cross-link involves residue K119. Residue K119 forms a Glycyl lysine isopeptide (Lys-Gly) (interchain with G-Cter in SUMO2); alternate linkage. K119 participates in a covalent cross-link: Glycyl lysine isopeptide (Lys-Gly) (interchain with G-Cter in SUMO1); alternate. The segment covering 131-168 (PKEDIKPLKRPRDEDDADYKPKKIKTEDIKKEKKRKLE) has biased composition (basic and acidic residues). Glycyl lysine isopeptide (Lys-Gly) (interchain with G-Cter in SUMO2) cross-links involve residues K136 and K150. Residue K155 forms a Glycyl lysine isopeptide (Lys-Gly) (interchain with G-Cter in SUMO); alternate linkage. A Glycyl lysine isopeptide (Lys-Gly) (interchain with G-Cter in SUMO2); alternate cross-link involves residue K155. Glycyl lysine isopeptide (Lys-Gly) (interchain with G-Cter in SUMO2) cross-links involve residues K160 and K166. K174 participates in a covalent cross-link: Glycyl lysine isopeptide (Lys-Gly) (interchain with G-Cter in SUMO2); alternate. Residue K174 is modified to N6-acetyllysine; alternate. Residues 181–201 (KDKDKKVPEPDNKKKKPKKEE) show a composition bias toward basic and acidic residues. K206 is covalently cross-linked (Glycyl lysine isopeptide (Lys-Gly) (interchain with G-Cter in SUMO2)). K282 is subject to N6-acetyllysine. A Glycyl lysine isopeptide (Lys-Gly) (interchain with G-Cter in SUMO2) cross-link involves residue K338. Interaction with DNA stretches follow at residues 427–428 (KY) and 490–495 (RAGNEK). Residues 434–767 (SSRIKGEKDW…IDMADEDYEF (334 aa)) form the Topo IB-type catalytic domain. The residue at position 508 (S508) is a Phosphoserine; by CK2. A Glycyl lysine isopeptide (Lys-Gly) (interchain with G-Cter in SUMO2) cross-link involves residue K551. An interaction with DNA region spans residues 587–589 (TAK). Residues K644, K702, and K714 each participate in a glycyl lysine isopeptide (Lys-Gly) (interchain with G-Cter in SUMO2) cross-link. Catalysis depends on Y725, which acts as the O-(3'-phospho-DNA)-tyrosine intermediate.

The protein belongs to the type IB topoisomerase family. As to quaternary structure, monomer. Interacts with ERCC6. Interacts with TPRN; TPRN interacts with a number of DNA damage response proteins, is recruited to sites of DNA damage and may play a role in DNA damage repair. Sumoylated. Lys-119 is the main site of sumoylation. Sumoylation plays a role in partitioning TOP1 between nucleoli and nucleoplasm. Levels are dramatically increased on camptothecin (CPT) treatment. Post-translationally, phosphorylation at Ser-508 by CK2 increases binding to supercoiled DNA and sensitivity to camptothecin.

Its subcellular location is the nucleus. It is found in the nucleolus. It localises to the nucleoplasm. The catalysed reaction is ATP-independent breakage of single-stranded DNA, followed by passage and rejoining.. With respect to regulation, specifically inhibited by camptothecin (CPT), a plant alkaloid with antitumor activity. Its function is as follows. Releases the supercoiling and torsional tension of DNA introduced during the DNA replication and transcription by transiently cleaving and rejoining one strand of the DNA duplex. Introduces a single-strand break via transesterification at a target site in duplex DNA. The scissile phosphodiester is attacked by the catalytic tyrosine of the enzyme, resulting in the formation of a DNA-(3'-phosphotyrosyl)-enzyme intermediate and the expulsion of a 5'-OH DNA strand. The free DNA strand then rotates around the intact phosphodiester bond on the opposing strand, thus removing DNA supercoils. Finally, in the religation step, the DNA 5'-OH attacks the covalent intermediate to expel the active-site tyrosine and restore the DNA phosphodiester backbone. Regulates the alternative splicing of tissue factor (F3) pre-mRNA in endothelial cells. Involved in the circadian transcription of the core circadian clock component BMAL1 by altering the chromatin structure around the ROR response elements (ROREs) on the BMAL1 promoter. The polypeptide is DNA topoisomerase 1 (TOP1) (Chlorocebus aethiops (Green monkey)).